Here is a 998-residue protein sequence, read N- to C-terminus: Antigenic heat-stable 120 kDa protein (998 aa).

Residues 1 to 69 (GGFMSQDHTG…LSGTISTDDQ (69 aa)) are disordered. Residues 12 to 21 (ENDEGYESDI) are compositionally biased toward acidic residues. Residues 46-68 (TPASSTQSTPAISTLSGTISTDD) are compositionally biased toward polar residues.

It is found in the cytoplasm. This Rickettsia akari protein is Antigenic heat-stable 120 kDa protein (sca4).